The chain runs to 447 residues: uncharacterized protein (447 aa).

It to E.coli plasmid IncP-alpha RP4 protein TraN.

This is an uncharacterized protein from Haemophilus influenzae (strain ATCC 51907 / DSM 11121 / KW20 / Rd).